Consider the following 361-residue polypeptide: Large ribosomal subunit protein uL3 (361 aa).

The disordered stretch occupies residues 339 to 361; sequence RPPKKKPPVQRPQITYVSVESKQ. Positions 350 to 361 are enriched in polar residues; sequence PQITYVSVESKQ.

Belongs to the universal ribosomal protein uL3 family. As to quaternary structure, part of the 50S ribosomal subunit. Forms a cluster with proteins L14 and L24e.

In terms of biological role, one of the primary rRNA binding proteins, it binds directly near the 3'-end of the 23S rRNA, where it nucleates assembly of the 50S subunit. In Pyrococcus abyssi (strain GE5 / Orsay), this protein is Large ribosomal subunit protein uL3.